Here is a 419-residue protein sequence, read N- to C-terminus: Lipoyl synthase, mitochondrial (419 aa).

The transit peptide at 1 to 26 (MAVCAGRLKCFGNPAVSLRTAASRAY) directs the protein to the mitochondrion. Residues 28–47 (TTTSPDPAIPSSSSASSSSA) show a composition bias toward low complexity. The interval 28-61 (TTTSPDPAIPSSSSASSSSALPKRPQTSFRDKLN) is disordered. [4Fe-4S] cluster contacts are provided by cysteine 136, cysteine 141, cysteine 147, cysteine 167, cysteine 171, cysteine 174, and serine 382. One can recognise a Radical SAM core domain in the interval 150–371 (GSSKSAATAT…KDRALEMGFL (222 aa)). The tract at residues 399 to 419 (AESTGPESTNVPNVTPDAIVR) is disordered.

Belongs to the radical SAM superfamily. Lipoyl synthase family. [4Fe-4S] cluster serves as cofactor.

Its subcellular location is the mitochondrion. The catalysed reaction is [[Fe-S] cluster scaffold protein carrying a second [4Fe-4S](2+) cluster] + N(6)-octanoyl-L-lysyl-[protein] + 2 oxidized [2Fe-2S]-[ferredoxin] + 2 S-adenosyl-L-methionine + 4 H(+) = [[Fe-S] cluster scaffold protein] + N(6)-[(R)-dihydrolipoyl]-L-lysyl-[protein] + 4 Fe(3+) + 2 hydrogen sulfide + 2 5'-deoxyadenosine + 2 L-methionine + 2 reduced [2Fe-2S]-[ferredoxin]. It participates in protein modification; protein lipoylation via endogenous pathway; protein N(6)-(lipoyl)lysine from octanoyl-[acyl-carrier-protein]: step 2/2. Catalyzes the radical-mediated insertion of two sulfur atoms into the C-6 and C-8 positions of the octanoyl moiety bound to the lipoyl domains of lipoate-dependent enzymes, thereby converting the octanoylated domains into lipoylated derivatives. In Coccidioides posadasii (strain C735) (Valley fever fungus), this protein is Lipoyl synthase, mitochondrial.